The sequence spans 484 residues: Ribosome biogenesis protein YTM1 (484 aa).

The tract at residues 11 to 94 (VKVLFTTTEQ…EKTVTLQYVR (84 aa)) is ubiquitin-like (UBL) domain. WD repeat units lie at residues 121–160 (SSAG…LATS), 166–204 (GPLC…DHFS), 215–254 (GHRS…APEA), 289–329 (VHSR…VVST), 331–372 (TTSN…AATS), 378–418 (GHIN…PAAG), and 448–484 (GEGV…IISS).

This sequence belongs to the WD repeat WDR12/YTM1 family. As to quaternary structure, component of the NOP7 complex, composed of ERB1, NOP7 and YTM1. The complex is held together by ERB1, which interacts with NOP7 via its N-terminal domain and with YTM1 via a high-affinity interaction between the seven-bladed beta-propeller domains of the 2 proteins. The NOP7 complex associates with the 66S pre-ribosome. Interacts (via UBL domain) with MDN1 (via VWFA/MIDAS domain).

The protein resides in the nucleus. The protein localises to the nucleolus. It localises to the nucleoplasm. In terms of biological role, component of the NOP7 complex, which is required for maturation of the 25S and 5.8S ribosomal RNAs and formation of the 60S ribosome. This chain is Ribosome biogenesis protein YTM1, found in Pyricularia oryzae (strain 70-15 / ATCC MYA-4617 / FGSC 8958) (Rice blast fungus).